Reading from the N-terminus, the 151-residue chain is Caveolin-3 (151 aa).

At 1 to 83 (MMAEEHTDLE…RLLSTLLGVP (83 aa)) the chain is on the cytoplasmic side. Residue lysine 38 forms a Glycyl lysine isopeptide (Lys-Gly) (interchain with G-Cter in SUMO3) linkage. Residues 64–114 (TFTVSKYWCYRLLSTLLGVPLALLWGFLFACISFCHIWAVVPCIKSYLIEI) are required for interaction with DAG1. Residues 84 to 104 (LALLWGFLFACISFCHIWAVV) constitute an intramembrane region (helical). Residues 105-151 (PCIKSYLIEIQCISHIYSLCIRTFCNPLFAALGQVCSSIKVVLRKEV) lie on the Cytoplasmic side of the membrane.

This sequence belongs to the caveolin family. As to quaternary structure, homooligomer. Interacts with DLG1 and KCNA5; forms a ternary complex. Interacts with TRIM72. Interacts with MUSK; may regulate MUSK signaling. Interacts with DAG1 (via its C-terminal); the interaction prevents binding of DAG1 with DMD. Interacts with DYSF. Interacts with POPDC1. Interacts with CAVIN1 and CAVIN2. Interacts with CAVIN4. Sumoylation with SUMO3 by PIAS4 may reduce agonist-induced internalization and desensitization of adrenergic receptor ABRD2. Expressed predominantly in muscle.

The protein localises to the golgi apparatus membrane. It is found in the cell membrane. The protein resides in the membrane. Its subcellular location is the caveola. It localises to the sarcolemma. Its function is as follows. May act as a scaffolding protein within caveolar membranes. Interacts directly with G-protein alpha subunits and can functionally regulate their activity. May also regulate voltage-gated potassium channels. Plays a role in the sarcolemma repair mechanism of both skeletal muscle and cardiomyocytes that permits rapid resealing of membranes disrupted by mechanical stress. Mediates the recruitment of CAVIN2 and CAVIN3 proteins to the caveolae. This Homo sapiens (Human) protein is Caveolin-3 (CAV3).